Here is a 290-residue protein sequence, read N- to C-terminus: ATP synthase gamma chain (290 aa).

Belongs to the ATPase gamma chain family. As to quaternary structure, F-type ATPases have 2 components, CF(1) - the catalytic core - and CF(0) - the membrane proton channel. CF(1) has five subunits: alpha(3), beta(3), gamma(1), delta(1), epsilon(1). CF(0) has three main subunits: a, b and c.

The protein resides in the cell membrane. In terms of biological role, produces ATP from ADP in the presence of a proton gradient across the membrane. The gamma chain is believed to be important in regulating ATPase activity and the flow of protons through the CF(0) complex. This chain is ATP synthase gamma chain, found in Akkermansia muciniphila (strain ATCC BAA-835 / DSM 22959 / JCM 33894 / BCRC 81048 / CCUG 64013 / CIP 107961 / Muc).